Consider the following 167-residue polypeptide: Transcription factor E (167 aa).

The region spanning E5–D87 is the HTH TFE/IIEalpha-type domain.

The protein belongs to the TFE family. Monomer. Interaction with RNA polymerase subunits RpoF and RpoE is necessary for Tfe stimulatory transcription activity. Able to interact with Tbp and RNA polymerase in the absence of DNA promoter. Interacts both with the preinitiation and elongation complexes.

Transcription factor that plays a role in the activation of archaeal genes transcribed by RNA polymerase. Facilitates transcription initiation by enhancing TATA-box recognition by TATA-box-binding protein (Tbp), and transcription factor B (Tfb) and RNA polymerase recruitment. Not absolutely required for transcription in vitro, but particularly important in cases where Tbp or Tfb function is not optimal. It dynamically alters the nucleic acid-binding properties of RNA polymerases by stabilizing the initiation complex and destabilizing elongation complexes. Seems to translocate with the RNA polymerase following initiation and acts by binding to the non template strand of the transcription bubble in elongation complexes. The polypeptide is Transcription factor E (Methanothrix thermoacetophila (strain DSM 6194 / JCM 14653 / NBRC 101360 / PT) (Methanosaeta thermophila)).